Here is a 197-residue protein sequence, read N- to C-terminus: Non-structural protein 5 (197 aa).

Residues 17-30 are compositionally biased toward low complexity; the sequence is IFKNESSSTTSTLS. The interval 17–36 is disordered; that stretch reads IFKNESSSTTSTLSGKSIGR. Ser67 is modified (phosphoserine; by host CK1). Asp92 is a binding site for Mg(2+). Residues 131–167 are disordered; it reads DHKKEKSKKDKSRKHYPRIEADSDSEDYVLDDSDSDD. Residues 152–165 show a composition bias toward acidic residues; sequence DSDSEDYVLDDSDS. 4 positions are modified to phosphoserine; by host: Ser153, Ser155, Ser163, and Ser165.

Belongs to the rotavirus NSP5 family. Homodimer. Interacts with VP1. Interacts with VP2. Interacts with NSP2; this interaction leads to up-regulation of NSP5 hyperphosphorylation and formation of virus factories. Interacts with NSP6. Participates in the selective exclusion of host proteins from stress granules (SG) and P bodies (PB). Also participates in the sequestration of these remodeled organelles in viral factories. It depends on Mg(2+) as a cofactor. In terms of processing, O-glycosylated. Post-translationally, hyperphosphorylated on serine residues, when in dimeric form. Phosphorylation by host CK1 is required for the hyperphosphorylation of NSP5 dimer.

Its subcellular location is the host cytoplasm. Functionally, plays an essential role in the viral genome replication. Participates, together with NSP2, in the formation of viral factories (viroplasms), which are large inclusions in the host cytoplasm where replication intermediates are assembled and viral RNA replication takes place. Orchestrates the recruitment of viroplasmic proteins such as capsid proteins to these factories. Participates in the selective exclusion of host proteins from stress granules (SG) and P bodies (PB). Also participates in the sequestration of these remodeled organelles in viral factories. The protein is Non-structural protein 5 of Homo sapiens (Human).